Consider the following 65-residue polypeptide: MPKIKTVRGAAKRFKKTASGGFKRKHANLRHILTKKSTKRKRHLRPKSMVSKGDLGLVVRCLPYA.

The protein belongs to the bacterial ribosomal protein bL35 family.

In Sodalis glossinidius (strain morsitans), this protein is Large ribosomal subunit protein bL35.